We begin with the raw amino-acid sequence, 364 residues long: Aminomethyltransferase (364 aa).

The protein belongs to the GcvT family. The glycine cleavage system is composed of four proteins: P, T, L and H.

It catalyses the reaction N(6)-[(R)-S(8)-aminomethyldihydrolipoyl]-L-lysyl-[protein] + (6S)-5,6,7,8-tetrahydrofolate = N(6)-[(R)-dihydrolipoyl]-L-lysyl-[protein] + (6R)-5,10-methylene-5,6,7,8-tetrahydrofolate + NH4(+). Functionally, the glycine cleavage system catalyzes the degradation of glycine. This is Aminomethyltransferase from Thermotoga petrophila (strain ATCC BAA-488 / DSM 13995 / JCM 10881 / RKU-1).